Here is a 180-residue protein sequence, read N- to C-terminus: Bifunctional bis(5'-adenosyl)-triphosphatase/adenylylsulfatase FHIT (180 aa).

In terms of domain architecture, HIT spans 27–134 (SYAFGPYKID…LPRKGGDFEK (108 aa)). The substrate site is built by Asn-52 and Gln-108. Residues 119 to 123 (HVHIH) carry the Histidine triad motif motif. His-121 functions as the Tele-AMP-histidine intermediate in the catalytic mechanism. His-123 contacts substrate.

It carries out the reaction P(1),P(3)-bis(5'-adenosyl) triphosphate + H2O = AMP + ADP + 2 H(+). The enzyme catalyses adenosine 5'-phosphosulfate + H2O = sulfate + AMP + 2 H(+). It catalyses the reaction adenosine 5'-phosphosulfate + NH4(+) = adenosine 5'-phosphoramidate + sulfate + 2 H(+). The catalysed reaction is adenosine 5'-phosphoramidate + H2O = AMP + NH4(+). In terms of biological role, possesses dinucleoside triphosphate hydrolase activity. Cleaves P(1)-P(3)-bis(5'-adenosyl) triphosphate (Ap3A) to yield AMP and ADP. Exhibits adenylylsulfatase activity, hydrolyzing adenosine 5'-phosphosulfate to yield AMP and sulfate. Exhibits adenosine 5'-monophosphoramidase activity, hydrolyzing purine nucleotide phosphoramidates with a single phosphate group such as adenosine 5'monophosphoramidate (AMP-NH2) to yield AMP and NH2. Exhibits adenylylsulfate-ammonia adenylyltransferase, catalyzing the ammonolysis of adenosine 5'-phosphosulfate resulting in the formation of adenosine 5'-phosphoramidate. This is Bifunctional bis(5'-adenosyl)-triphosphatase/adenylylsulfatase FHIT from Arabidopsis thaliana (Mouse-ear cress).